The primary structure comprises 306 residues: tRNA pseudouridine synthase B (306 aa).

Asp-43 (nucleophile) is an active-site residue.

This sequence belongs to the pseudouridine synthase TruB family. Type 1 subfamily.

It catalyses the reaction uridine(55) in tRNA = pseudouridine(55) in tRNA. Its function is as follows. Responsible for synthesis of pseudouridine from uracil-55 in the psi GC loop of transfer RNAs. This chain is tRNA pseudouridine synthase B, found in Syntrophobacter fumaroxidans (strain DSM 10017 / MPOB).